The primary structure comprises 115 residues: Small ribosomal subunit protein bS6 (115 aa).

It belongs to the bacterial ribosomal protein bS6 family.

In terms of biological role, binds together with bS18 to 16S ribosomal RNA. The protein is Small ribosomal subunit protein bS6 of Syntrophotalea carbinolica (strain DSM 2380 / NBRC 103641 / GraBd1) (Pelobacter carbinolicus).